The chain runs to 393 residues: NAD(P)H-quinone oxidoreductase subunit H, chloroplastic (393 aa).

Belongs to the complex I 49 kDa subunit family. In terms of assembly, NDH is composed of at least 16 different subunits, 5 of which are encoded in the nucleus.

The protein localises to the plastid. Its subcellular location is the chloroplast thylakoid membrane. The catalysed reaction is a plastoquinone + NADH + (n+1) H(+)(in) = a plastoquinol + NAD(+) + n H(+)(out). It carries out the reaction a plastoquinone + NADPH + (n+1) H(+)(in) = a plastoquinol + NADP(+) + n H(+)(out). Functionally, NDH shuttles electrons from NAD(P)H:plastoquinone, via FMN and iron-sulfur (Fe-S) centers, to quinones in the photosynthetic chain and possibly in a chloroplast respiratory chain. The immediate electron acceptor for the enzyme in this species is believed to be plastoquinone. Couples the redox reaction to proton translocation, and thus conserves the redox energy in a proton gradient. This is NAD(P)H-quinone oxidoreductase subunit H, chloroplastic from Nandina domestica (Heavenly bamboo).